Reading from the N-terminus, the 305-residue chain is HPr kinase/phosphorylase (305 aa).

Catalysis depends on residues His136 and Lys157. ATP is bound at residue 151-158; that stretch reads GESGIGKS. Ser158 lines the Mg(2+) pocket. Asp175 functions as the Proton acceptor; for phosphorylation activity. Proton donor; for dephosphorylation activity in the catalytic mechanism. An important for the catalytic mechanism of both phosphorylation and dephosphorylation region spans residues 198–207; the sequence is LEVRGLGIID. Glu199 contributes to the Mg(2+) binding site. Arg240 is an active-site residue. Residues 261–266 are important for the catalytic mechanism of dephosphorylation; the sequence is PIRPGR.

It belongs to the HPrK/P family. In terms of assembly, homohexamer. It depends on Mg(2+) as a cofactor.

It carries out the reaction [HPr protein]-L-serine + ATP = [HPr protein]-O-phospho-L-serine + ADP + H(+). It catalyses the reaction [HPr protein]-O-phospho-L-serine + phosphate + H(+) = [HPr protein]-L-serine + diphosphate. Its function is as follows. Catalyzes the ATP- as well as the pyrophosphate-dependent phosphorylation of a specific serine residue in HPr, a phosphocarrier protein of the phosphoenolpyruvate-dependent sugar phosphotransferase system (PTS). HprK/P also catalyzes the pyrophosphate-producing, inorganic phosphate-dependent dephosphorylation (phosphorolysis) of seryl-phosphorylated HPr (P-Ser-HPr). The two antagonistic activities of HprK/P are regulated by several intracellular metabolites, which change their concentration in response to the absence or presence of rapidly metabolisable carbon sources (glucose, fructose, etc.) in the growth medium. Therefore, by controlling the phosphorylation state of HPr, HPrK/P is a sensor enzyme that plays a major role in the regulation of carbon metabolism and sugar transport: it mediates carbon catabolite repression (CCR), and regulates PTS-catalyzed carbohydrate uptake and inducer exclusion. This chain is HPr kinase/phosphorylase, found in Clostridium tetani (strain Massachusetts / E88).